The following is a 228-amino-acid chain: Phosphatidylserine decarboxylase proenzyme (228 aa).

Ser197 serves as the catalytic Schiff-base intermediate with substrate; via pyruvic acid. Residue Ser197 is modified to Pyruvic acid (Ser); by autocatalysis.

It belongs to the phosphatidylserine decarboxylase family. PSD-A subfamily. As to quaternary structure, heterodimer of a large membrane-associated beta subunit and a small pyruvoyl-containing alpha subunit. It depends on pyruvate as a cofactor. In terms of processing, is synthesized initially as an inactive proenzyme. Formation of the active enzyme involves a self-maturation process in which the active site pyruvoyl group is generated from an internal serine residue via an autocatalytic post-translational modification. Two non-identical subunits are generated from the proenzyme in this reaction, and the pyruvate is formed at the N-terminus of the alpha chain, which is derived from the carboxyl end of the proenzyme. The post-translation cleavage follows an unusual pathway, termed non-hydrolytic serinolysis, in which the side chain hydroxyl group of the serine supplies its oxygen atom to form the C-terminus of the beta chain, while the remainder of the serine residue undergoes an oxidative deamination to produce ammonia and the pyruvoyl prosthetic group on the alpha chain.

It is found in the cell membrane. The catalysed reaction is a 1,2-diacyl-sn-glycero-3-phospho-L-serine + H(+) = a 1,2-diacyl-sn-glycero-3-phosphoethanolamine + CO2. It functions in the pathway phospholipid metabolism; phosphatidylethanolamine biosynthesis; phosphatidylethanolamine from CDP-diacylglycerol: step 2/2. Functionally, catalyzes the formation of phosphatidylethanolamine (PtdEtn) from phosphatidylserine (PtdSer). The sequence is that of Phosphatidylserine decarboxylase proenzyme from Bacteroides fragilis (strain ATCC 25285 / DSM 2151 / CCUG 4856 / JCM 11019 / LMG 10263 / NCTC 9343 / Onslow / VPI 2553 / EN-2).